We begin with the raw amino-acid sequence, 141 residues long: Hemoglobin subunit alpha (141 aa).

In terms of domain architecture, Globin spans 1 to 141; that stretch reads VLSGDDKSNL…VSTVLTSKYR (141 aa). The residue at position 3 (serine 3) is a Phosphoserine. An N6-succinyllysine mark is found at lysine 7 and lysine 11. Position 16 is an N6-acetyllysine; alternate (lysine 16). Residue lysine 16 is modified to N6-succinyllysine; alternate. Tyrosine 24 carries the phosphotyrosine modification. Position 40 is an N6-succinyllysine (lysine 40). Serine 49 is subject to Phosphoserine. Histidine 58 lines the O2 pocket. Histidine 87 provides a ligand contact to heme b. Serine 102 is modified (phosphoserine). Threonine 108 bears the Phosphothreonine mark. A phosphoserine mark is found at serine 124 and serine 131. 2 positions are modified to phosphothreonine: threonine 134 and threonine 137. Serine 138 carries the post-translational modification Phosphoserine.

It belongs to the globin family. As to quaternary structure, heterotetramer of two alpha chains and two beta chains. In terms of tissue distribution, red blood cells.

Functionally, involved in oxygen transport from the lung to the various peripheral tissues. The sequence is that of Hemoglobin subunit alpha from Microtus pennsylvanicus (Meadow vole).